The sequence spans 342 residues: MTLILKRVQLLKDKPRREAIDRFLRQHQLSLEADCEMAIIAEYQQRLVGCGAIAGNVLKCIAIDPSLQGEGLSLKLLTELLTLAYELGRSELFLFTKPCNAALFSGAGFWPIAQAGDRAVLMENSRERLTRYCRQLAMYRQPGRKIGAIVMNANPFTLGHRWLVEQAASQCDWLHLFVVKEDASCFSYHDRFKLIEQGITGIDKVTLHPGSAYLISRATFPGYFLKEQGVVDDCHSQIDLQLFRERLAPALQITHRFVGTEPLCPLTRNYNQRMKSLLEAPGDAPPIEVVELARIEKNGGPVSASRVRELYRQRNWQAVAALVPPGTLSFLMQLAESEHQTA.

The N-acetyltransferase domain occupies 1 to 127 (MTLILKRVQL…RAVLMENSRE (127 aa)).

It carries out the reaction holo-[citrate lyase ACP] + acetate + ATP = acetyl-[citrate lyase ACP] + AMP + diphosphate. Functionally, acetylation of prosthetic group (2-(5''-phosphoribosyl)-3'-dephosphocoenzyme-A) of the gamma subunit of citrate lyase. This Klebsiella pneumoniae protein is [Citrate [pro-3S]-lyase] ligase (citC).